A 403-amino-acid chain; its full sequence is GPI-N-acetylgalactosamine transferase PGAP4 (403 aa).

Topologically, residues 1 to 22 are cytoplasmic; it reads MTTSTSPAAMLLRRLRRLSWGS. The chain crosses the membrane as a helical span at residues 23–43; that stretch reads TAVQLFILTVVTFGLLAPLAC. Topologically, residues 44–264 are lumenal; that stretch reads HRLLHSYFYL…INPEPMRILE (221 aa). A UDP-N-acetyl-alpha-D-galactosamine-binding site is contributed by Val-109. 2 cysteine pairs are disulfide-bonded: Cys-132–Cys-136 and Cys-144–Cys-194. The DXD motif motif lies at 211–213; that stretch reads EDD. A helical transmembrane segment spans residues 265–285; that stretch reads WVGVGMLLGPVLTWIYMRFAC. Residues 286–287 are Cytoplasmic-facing; the sequence is RP. The helical transmembrane segment at 288 to 308 threads the bilayer; that stretch reads GFSWPVMLFFCLYSMGLVELV. Topologically, residues 309–403 are lumenal; sequence GRHYFLELRR…LRYNFHPSLL (95 aa). Residues Cys-332 and Cys-333 are joined by a disulfide bond. UDP-N-acetyl-alpha-D-galactosamine contacts are provided by Thr-334, Pro-335, and Lys-362.

Belongs to the PGAP4 family. Glycosylated.

It is found in the golgi apparatus membrane. Functionally, golgi-resident glycosylphosphatidylinositol (GPI)-N-acetylgalactosamine transferase that catalyzes the N-acetyl-beta-D-galactosamine transfer from an UDP-N-acetyl-alpha-D-galactosamine to the 4-OH-position of first mannose of the glycosylphosphatidylinositol (GPI) of a GPI-anchored protein (GPI-AP). This modification occurs after the fatty acid remodeling step of the GPI-anchor maturation. The sequence is that of GPI-N-acetylgalactosamine transferase PGAP4 from Mus musculus (Mouse).